The primary structure comprises 61 residues: Small ribosomal subunit protein uS14 (61 aa).

Zn(2+) contacts are provided by cysteine 24, cysteine 27, cysteine 40, and cysteine 43.

It belongs to the universal ribosomal protein uS14 family. Zinc-binding uS14 subfamily. In terms of assembly, part of the 30S ribosomal subunit. Contacts proteins S3 and S10. It depends on Zn(2+) as a cofactor.

Functionally, binds 16S rRNA, required for the assembly of 30S particles and may also be responsible for determining the conformation of the 16S rRNA at the A site. The sequence is that of Small ribosomal subunit protein uS14 from Spiroplasma citri.